A 616-amino-acid chain; its full sequence is Chaperone protein HscA homolog (616 aa).

This sequence belongs to the heat shock protein 70 family.

Functionally, chaperone involved in the maturation of iron-sulfur cluster-containing proteins. Has a low intrinsic ATPase activity which is markedly stimulated by HscB. The protein is Chaperone protein HscA homolog of Mannheimia succiniciproducens (strain KCTC 0769BP / MBEL55E).